A 247-amino-acid chain; its full sequence is Probable transcriptional regulatory protein Spro_2779 (247 aa).

The protein belongs to the TACO1 family.

The protein localises to the cytoplasm. The protein is Probable transcriptional regulatory protein Spro_2779 of Serratia proteamaculans (strain 568).